Consider the following 95-residue polypeptide: Aspartyl/glutamyl-tRNA(Asn/Gln) amidotransferase subunit C (95 aa).

It belongs to the GatC family. Heterotrimer of A, B and C subunits.

It catalyses the reaction L-glutamyl-tRNA(Gln) + L-glutamine + ATP + H2O = L-glutaminyl-tRNA(Gln) + L-glutamate + ADP + phosphate + H(+). The enzyme catalyses L-aspartyl-tRNA(Asn) + L-glutamine + ATP + H2O = L-asparaginyl-tRNA(Asn) + L-glutamate + ADP + phosphate + 2 H(+). Functionally, allows the formation of correctly charged Asn-tRNA(Asn) or Gln-tRNA(Gln) through the transamidation of misacylated Asp-tRNA(Asn) or Glu-tRNA(Gln) in organisms which lack either or both of asparaginyl-tRNA or glutaminyl-tRNA synthetases. The reaction takes place in the presence of glutamine and ATP through an activated phospho-Asp-tRNA(Asn) or phospho-Glu-tRNA(Gln). The polypeptide is Aspartyl/glutamyl-tRNA(Asn/Gln) amidotransferase subunit C (Chlorobium phaeobacteroides (strain BS1)).